The following is a 273-amino-acid chain: MGRSRSRSSSRSKHTKSSKHNKKRSRSRSRSRDKERVRKRSKSRESKRNRRRESRSRSRSTNTAVSRRERDRERASSPPDRIDIFGRTVSKRSSLDEKQKREEEEKKAEFERQRKIRQQEIEEKLIEEETARRVEELVAKRVEEELEKRKDEIEREVLRRVEEAKRIMEKQLLEELERQRQAELAAQKAREEEERAKREELERILEENNRKIAEAQAKLAEEQLRIVEEQRKIHEERMKLEQERQRQQKEEQKIILGKGKSRPKLSFSLKTQD.

2 stretches are compositionally biased toward basic residues: residues 1 to 29 (MGRSRSRSSSRSKHTKSSKHNKKRSRSRS) and 37 to 58 (VRKRSKSRESKRNRRRESRSRS). A necessary and sufficient for RNA binding region spans residues 1-74 (MGRSRSRSSS…VSRRERDRER (74 aa)). The disordered stretch occupies residues 1 to 113 (MGRSRSRSSS…EEKKAEFERQ (113 aa)). Phosphoserine occurs at positions 58 and 60. The residue at position 61 (Thr-61) is a Phosphothreonine. Basic and acidic residues-rich tracts occupy residues 66-84 (SRRERDRERASSPPDRIDI) and 93-113 (SSLDEKQKREEEEKKAEFERQ). A necessary and sufficient for transcriptional regulation region spans residues 75 to 273 (ASSPPDRIDI…KLSFSLKTQD (199 aa)). Ser-76 and Ser-77 each carry phosphoserine. The short motif at 172 to 176 (LLEEL) is the LXXLL motif 1; degenerate element. Residues 201–205 (LERIL) carry the LXXLL motif 2; degenerate motif. Residues 238–253 (MKLEQERQRQQKEEQK) show a composition bias toward basic and acidic residues. The segment at 238–273 (MKLEQERQRQQKEEQKIILGKGKSRPKLSFSLKTQD) is disordered. The residue at position 266 (Ser-266) is a Phosphoserine.

It belongs to the ARGLU1 family. In terms of assembly, interacts with MED1; the interaction is direct. Interacts with PUF60, U2AF2 and JMJD6; may interact with other proteins involved in RNA processing and splicing.

The protein resides in the nucleus. It localises to the nucleus speckle. It is found in the chromosome. Functionally, dual function regulator of gene expression; regulator of transcription and modulator of alternative splicing. General coactivator of nuclear receptor-induced gene expression, including genes activated by the glucocorticoid receptor NR3C1. Binds to a subset of pre-mRNAs and to components of the spliceosome machinery to directly modulate basal alternative splicing; involved in simple and complex cassette exon splicing events. Binds its own pre-mRNA and regulates its alternative splicing and degradation; one of the alternatively spliced products is a stable intronic sequence RNA (sisRNA) that binds the protein to regulate its ability to affect splicing. Binding of the sisRNA stimulates phase separation and localization to nuclear speckles, which may contribute to activation of nuclear receptor-induced gene expression. May also indirectly modulate alternative splicing. Regulates transcription of genes involved in heart development, neuronal cell function, protein localization and chromatin localization. Regulates splicing of genes involved in neurogenesis and chromatin organization. Essential for central nervous system development. Required for the estrogen-dependent expression of ESR1 target genes. Can act in cooperation with MED1. The chain is Arginine and glutamate-rich protein 1 (ARGLU1) from Bos taurus (Bovine).